A 163-amino-acid polypeptide reads, in one-letter code: Type-2 ice-structuring protein (163 aa).

Residues 1–17 (MLTVSLLVCAMMALTQA) form the signal peptide. The propeptide occupies 18–34 (NDDKILKGTATEAGPVS). A C-type lectin domain is found at 39–163 (PNCPAGWQPL…SHKSVCAMTF (125 aa)). Disulfide bonds link Cys41–Cys52, Cys69–Cys159, Cys103–Cys134, Cys123–Cys145, and Cys135–Cys151.

The N-terminus is blocked.

Its subcellular location is the secreted. Antifreeze proteins lower the blood freezing point. The chain is Type-2 ice-structuring protein from Hemitripterus americanus (Sea raven).